The primary structure comprises 164 residues: Vesiculogenesis and immune response regulator (164 aa).

In terms of processing, could be O-mannosylated. Is likely mannosylated on Thr-61 when overexpressed in M.smegmatis.

The protein resides in the cell inner membrane. It localises to the cytoplasm. Its function is as follows. Virulence factor that regulates vesiculogenesis. Acts by regulating the production of mycobacterial membrane vesicles (MV) bearing Toll-like receptor 2 (TLR2) ligands, including the lipoproteins LpqH, a major host TLR2 agonist, and SodC. By restraining the release of most of the material that activates host cells through TLR2, VirR reduces the immunostimulant potential of M.tuberculosis and increases its virulence. May contribute to cell envelope integrity. When overexpressed in M.smegmatis, it modulates the production of IL-10, IL-12 p40 and TNF-alpha by RAW264.7 macrophages and it decreases the killing of M.smegmatis. This chain is Vesiculogenesis and immune response regulator, found in Mycobacterium tuberculosis (strain ATCC 25618 / H37Rv).